Reading from the N-terminus, the 163-residue chain is Small ribosomal subunit protein uS5 (163 aa).

Positions L11–V74 constitute an S5 DRBM domain.

Belongs to the universal ribosomal protein uS5 family. In terms of assembly, part of the 30S ribosomal subunit. Contacts proteins S4 and S8.

In terms of biological role, with S4 and S12 plays an important role in translational accuracy. Located at the back of the 30S subunit body where it stabilizes the conformation of the head with respect to the body. This Syntrophotalea carbinolica (strain DSM 2380 / NBRC 103641 / GraBd1) (Pelobacter carbinolicus) protein is Small ribosomal subunit protein uS5.